The primary structure comprises 346 residues: Holliday junction branch migration complex subunit RuvB (346 aa).

The tract at residues 1-181 is large ATPase domain (RuvB-L); it reads MSDRNPLIDA…FGIPTRLNFY (181 aa). Residues Leu20, Arg21, Gly62, Lys65, Thr66, Thr67, 128 to 130, Arg171, Tyr181, and Arg218 each bind ATP; that span reads EDF. Thr66 lines the Mg(2+) pocket. The tract at residues 182-252 is small ATPAse domain (RuvB-S); it reads TVEELEYIVR…IADEALSRLE (71 aa). A head domain (RuvB-H) region spans residues 255 to 346; it reads NRGLDQLDRR…SQYGLFMEDE (92 aa). The DNA site is built by Arg291, Arg310, and Arg315.

It belongs to the RuvB family. In terms of assembly, homohexamer. Forms an RuvA(8)-RuvB(12)-Holliday junction (HJ) complex. HJ DNA is sandwiched between 2 RuvA tetramers; dsDNA enters through RuvA and exits via RuvB. An RuvB hexamer assembles on each DNA strand where it exits the tetramer. Each RuvB hexamer is contacted by two RuvA subunits (via domain III) on 2 adjacent RuvB subunits; this complex drives branch migration. In the full resolvosome a probable DNA-RuvA(4)-RuvB(12)-RuvC(2) complex forms which resolves the HJ.

The protein localises to the cytoplasm. The catalysed reaction is ATP + H2O = ADP + phosphate + H(+). Its function is as follows. The RuvA-RuvB-RuvC complex processes Holliday junction (HJ) DNA during genetic recombination and DNA repair, while the RuvA-RuvB complex plays an important role in the rescue of blocked DNA replication forks via replication fork reversal (RFR). RuvA specifically binds to HJ cruciform DNA, conferring on it an open structure. The RuvB hexamer acts as an ATP-dependent pump, pulling dsDNA into and through the RuvAB complex. RuvB forms 2 homohexamers on either side of HJ DNA bound by 1 or 2 RuvA tetramers; 4 subunits per hexamer contact DNA at a time. Coordinated motions by a converter formed by DNA-disengaged RuvB subunits stimulates ATP hydrolysis and nucleotide exchange. Immobilization of the converter enables RuvB to convert the ATP-contained energy into a lever motion, pulling 2 nucleotides of DNA out of the RuvA tetramer per ATP hydrolyzed, thus driving DNA branch migration. The RuvB motors rotate together with the DNA substrate, which together with the progressing nucleotide cycle form the mechanistic basis for DNA recombination by continuous HJ branch migration. Branch migration allows RuvC to scan DNA until it finds its consensus sequence, where it cleaves and resolves cruciform DNA. The protein is Holliday junction branch migration complex subunit RuvB of Brucella anthropi (strain ATCC 49188 / DSM 6882 / CCUG 24695 / JCM 21032 / LMG 3331 / NBRC 15819 / NCTC 12168 / Alc 37) (Ochrobactrum anthropi).